The primary structure comprises 1894 residues: 1,3-beta-glucan synthase component bgs2 (1894 aa).

Disordered stretches follow at residues 1-53 (MSWH…DSNK) and 282-310 (GPKIKQAKKKQKRKSNKAETEGTNEPETS). Over residues 32 to 51 (EFNNPGEESTYPQANSWNDS) the composition is skewed to polar residues. Residues 286–296 (KQAKKKQKRKS) are compositionally biased toward basic residues. Helical transmembrane passes span 530 to 550 (VSLGGAVATLLMLLATIFEWI), 566 to 586 (FLILILFFILNVAPTVFVFGF), 600 to 620 (VAIVHFIFSVFTFIYFSLVPL), 655 to 675 (VSWGLWLLVFGAKFTESYFFL), 710 to 730 (ILLGIMYVTDLVLFFLDTYLW), 731 to 751 (YILVNTVFSVARSFFLGISIW), 1338 to 1358 (IFIMLSVQLFMVVLVNLGGMY), 1394 to 1414 (CIISIFIVFFISFVPLTVQEL), 1476 to 1498 (LLFSRFAGPSIYLGSRTLLMLLF), 1503 to 1525 (VWIPHLIYFWISTLAMCISPFIF), 1598 to 1618 (FTEIFIPLMLVPLTLVSYFFI), 1637 to 1657 (ILILAFLPIIVAAVVSMTFAG), 1673 to 1693 (FGAVLAALAHGITVFMFIIVF), 1697 to 1717 (WYLEAWCLAKTVLSMLCIIAI), 1778 to 1798 (DFFLCHLLLFLMLPVLLIPFI), and 1837 to 1857 (TMFFLLLIAFLALIIIPLVVA).

Belongs to the glycosyltransferase 48 family. Component of the 1,3-beta-glucan synthase (GS) complex, composed of at least the alternate catalytic subunits bgs1, bgs2, bgs3, and bgs4, and a regulatory subunit chr4.

Its subcellular location is the prospore membrane. The enzyme catalyses [(1-&gt;3)-beta-D-glucosyl](n) + UDP-alpha-D-glucose = [(1-&gt;3)-beta-D-glucosyl](n+1) + UDP + H(+). Its function is as follows. Alternate catalytic subunit of the 1,3-beta-glucan synthase (GS) complex. Synthesizes 1,3-beta-glucan, a major structural component of the yeast cell wall. Has a role in ascospore development where it is required for the assembly of a functional spore wall. This chain is 1,3-beta-glucan synthase component bgs2, found in Schizosaccharomyces pombe (strain 972 / ATCC 24843) (Fission yeast).